The primary structure comprises 283 residues: DegV domain-containing protein BH3627 (283 aa).

The 278-residue stretch at 4–281 (IAIVTDSTAY…EGSIGLSWYI (278 aa)) folds into the DegV domain. Hexadecanoate contacts are provided by Thr-62 and Ser-95.

May bind long-chain fatty acids, such as palmitate, and may play a role in lipid transport or fatty acid metabolism. This Halalkalibacterium halodurans (strain ATCC BAA-125 / DSM 18197 / FERM 7344 / JCM 9153 / C-125) (Bacillus halodurans) protein is DegV domain-containing protein BH3627.